A 277-amino-acid polypeptide reads, in one-letter code: Large ribosomal subunit protein uL2 (277 aa).

The tract at residues 218 to 277 (PTVRGSVMNPNDHPHGGGEGKAPVGRKAPSTPWGKPALGLKTRNKKAKSDKLIVRRRNEK) is disordered. Basic and acidic residues predominate over residues 264-277 (AKSDKLIVRRRNEK).

Belongs to the universal ribosomal protein uL2 family. As to quaternary structure, part of the 50S ribosomal subunit. Forms a bridge to the 30S subunit in the 70S ribosome.

In terms of biological role, one of the primary rRNA binding proteins. Required for association of the 30S and 50S subunits to form the 70S ribosome, for tRNA binding and peptide bond formation. It has been suggested to have peptidyltransferase activity; this is somewhat controversial. Makes several contacts with the 16S rRNA in the 70S ribosome. The sequence is that of Large ribosomal subunit protein uL2 from Streptococcus pyogenes serotype M4 (strain MGAS10750).